The sequence spans 480 residues: Glutathione reductase (480 aa).

Residues Ser-31 and Gly-32 each contribute to the FAD site. Ser-31 provides a ligand contact to glutathione. Arg-38 contributes to the glutathione binding site. 4 residues coordinate FAD: Glu-51, Thr-58, Cys-59, and Lys-67. Cys-59 and Cys-64 form a disulfide bridge. Residue Tyr-121 coordinates glutathione. Position 137 (Ala-137) interacts with FAD. Positions 206, 209, 226, and 291 each coordinate NADP(+). Asp-331 is an FAD binding site. Residue Glu-337 participates in NADP(+) binding. Position 339 (Thr-339) interacts with FAD. Arg-347 contributes to the glutathione binding site. Residue Val-372 coordinates NADP(+). Lys-422 is a binding site for glutathione. FAD is bound at residue His-469. The active-site Proton acceptor is His-469.

This sequence belongs to the class-I pyridine nucleotide-disulfide oxidoreductase family. As to quaternary structure, homodimer. FAD is required as a cofactor.

It is found in the cytoplasm. It localises to the mitochondrion. The enzyme catalyses 2 glutathione + NADP(+) = glutathione disulfide + NADPH + H(+). Catalyzes the reduction of glutathione disulfide (GSSG) to reduced glutathione (GSH). Constitutes the major mechanism to maintain a high GSH:GSSG ratio in the cytosol. The polypeptide is Glutathione reductase (GLR1) (Eremothecium gossypii (strain ATCC 10895 / CBS 109.51 / FGSC 9923 / NRRL Y-1056) (Yeast)).